A 367-amino-acid chain; its full sequence is Histidinol-phosphate aminotransferase (367 aa).

N6-(pyridoxal phosphate)lysine is present on lysine 221.

This sequence belongs to the class-II pyridoxal-phosphate-dependent aminotransferase family. Histidinol-phosphate aminotransferase subfamily. In terms of assembly, homodimer. Pyridoxal 5'-phosphate is required as a cofactor.

It catalyses the reaction L-histidinol phosphate + 2-oxoglutarate = 3-(imidazol-4-yl)-2-oxopropyl phosphate + L-glutamate. It functions in the pathway amino-acid biosynthesis; L-histidine biosynthesis; L-histidine from 5-phospho-alpha-D-ribose 1-diphosphate: step 7/9. This chain is Histidinol-phosphate aminotransferase, found in Erythrobacter litoralis (strain HTCC2594).